A 153-amino-acid chain; its full sequence is Endoribonuclease YbeY (153 aa).

Zn(2+) contacts are provided by histidine 114, histidine 118, and histidine 124.

The protein belongs to the endoribonuclease YbeY family. The cofactor is Zn(2+).

It is found in the cytoplasm. Its function is as follows. Single strand-specific metallo-endoribonuclease involved in late-stage 70S ribosome quality control and in maturation of the 3' terminus of the 16S rRNA. The chain is Endoribonuclease YbeY from Shewanella baltica (strain OS155 / ATCC BAA-1091).